The following is a 505-amino-acid chain: Lysine--tRNA ligase, heat inducible (505 aa).

N6-acetyllysine is present on residues lysine 114 and lysine 156. Positions 415 and 422 each coordinate Mg(2+).

The protein belongs to the class-II aminoacyl-tRNA synthetase family. In terms of assembly, homodimer. The cofactor is Mg(2+).

The protein localises to the cytoplasm. The catalysed reaction is tRNA(Lys) + L-lysine + ATP = L-lysyl-tRNA(Lys) + AMP + diphosphate. This is Lysine--tRNA ligase, heat inducible (lysU) from Escherichia coli O6:H1 (strain CFT073 / ATCC 700928 / UPEC).